The following is a 695-amino-acid chain: Eukaryotic translation initiation factor 3 subunit B (695 aa).

The span at 1-10 (MAKKKGDEKA) shows a compositional bias: basic and acidic residues. The disordered stretch occupies residues 1 to 43 (MAKKKGDEKANPAPQSDNEEQNFEEEPDFDDPEDFVEIPEEEL). Residues 17–43 (DNEEQNFEEEPDFDDPEDFVEIPEEEL) are compositionally biased toward acidic residues. The region spanning 60–144 (NVVVVDGCPQ…HTFLVNLFTD (85 aa)) is the RRM domain. WD repeat units lie at residues 164-205 (KVQS…PLLL), 295-335 (PPDE…LLDK), 338-373 (IKIP…TLLE), and 444-486 (EIKE…APTL).

This sequence belongs to the eIF-3 subunit B family. As to quaternary structure, component of the eukaryotic translation initiation factor 3 (eIF-3) complex.

The protein resides in the cytoplasm. In terms of biological role, RNA-binding component of the eukaryotic translation initiation factor 3 (eIF-3) complex, which is involved in protein synthesis of a specialized repertoire of mRNAs and, together with other initiation factors, stimulates binding of mRNA and methionyl-tRNAi to the 40S ribosome. The eIF-3 complex specifically targets and initiates translation of a subset of mRNAs involved in cell proliferation. The sequence is that of Eukaryotic translation initiation factor 3 subunit B from Bombyx mori (Silk moth).